Reading from the N-terminus, the 125-residue chain is MTQPVLYKYSVIQFPGSFDSSVHNSYVCIPNSWIINRDEKKVIVAVPSNEEVPVSMSCILNNGPPSSHWKTYAGTLKYETGKSKILFTFFKCSYQLYKILIVIDSLQLTDPSNFIPQEMMSPTIQ.

This is an uncharacterized protein from Microplitis demolitor (Parasitoid wasp).